The primary structure comprises 95 residues: DNA-directed RNA polymerase subunit Rpo6 (95 aa).

Belongs to the archaeal Rpo6/eukaryotic RPB6 RNA polymerase subunit family. In terms of assembly, part of the RNA polymerase complex.

It is found in the cytoplasm. It carries out the reaction RNA(n) + a ribonucleoside 5'-triphosphate = RNA(n+1) + diphosphate. Functionally, DNA-dependent RNA polymerase (RNAP) catalyzes the transcription of DNA into RNA using the four ribonucleoside triphosphates as substrates. This chain is DNA-directed RNA polymerase subunit Rpo6, found in Saccharolobus islandicus (strain M.16.27) (Sulfolobus islandicus).